Reading from the N-terminus, the 533-residue chain is Sterol 26-hydroxylase, mitochondrial (533 aa).

The transit peptide at 1 to 32 (MAAWSRTRLRWTLLDPRVVGRGLCPQGARAKA) directs the protein to the mitochondrion. Positions 34-60 (IPAALQAQESTEGPGTGQDRPRLRSPA) are disordered. N6-acetyllysine occurs at positions 142, 232, 285, 296, and 375. The segment at 386-400 (PLLKAVIKETLRLYP) is sterol-binding. Cys479 provides a ligand contact to heme. Lys512 and Lys523 each carry N6-acetyllysine.

The protein belongs to the cytochrome P450 family. As to quaternary structure, interacts with HSP70; this interaction is required for initial targeting to mitochondria. The cofactor is heme. Acetylation of Lys-125 and Lys-285 is observed in liver mitochondria from fasted mice but not from fed mice. As to expression, expressed in the gray and white matter of cerebellum (at protein level).

The protein resides in the mitochondrion inner membrane. The catalysed reaction is 5beta-cholestane-3alpha,7alpha,12alpha-triol + 6 reduced [adrenodoxin] + 3 O2 + 5 H(+) = (25R)-3alpha,7alpha,12alpha-trihydroxy-5beta-cholestan-26-oate + 6 oxidized [adrenodoxin] + 4 H2O. The enzyme catalyses cholestanol + 2 reduced [adrenodoxin] + O2 + 2 H(+) = (25R)-26-hydroxycholestanol + 2 oxidized [adrenodoxin] + H2O. It catalyses the reaction (25R)-3beta-hydroxycholest-5-en-7-one-26-al + 2 reduced [adrenodoxin] + O2 + H(+) = (25R)-3beta-hydroxycholest-5-en-7-one-26-oate + 2 oxidized [adrenodoxin] + H2O. It carries out the reaction (25R)-3beta,26-dihydroxycholest-5-en-7-one + 2 reduced [adrenodoxin] + O2 + 2 H(+) = (25R)-3beta-hydroxycholest-5-en-7-one-26-al + 2 oxidized [adrenodoxin] + 2 H2O. The catalysed reaction is 7-oxocholesterol + 2 reduced [adrenodoxin] + O2 + 2 H(+) = (25R)-3beta,26-dihydroxycholest-5-en-7-one + 2 oxidized [adrenodoxin] + H2O. The enzyme catalyses calciol + 2 reduced [adrenodoxin] + O2 + 2 H(+) = calcidiol + 2 oxidized [adrenodoxin] + H2O. It catalyses the reaction (25R)-5beta-cholestane-3alpha,7alpha,12alpha,26-tetrol + 2 reduced [adrenodoxin] + O2 + 2 H(+) = (25R)-3alpha,7alpha,12alpha-trihydroxy-5beta-cholestan-26-al + 2 oxidized [adrenodoxin] + 2 H2O. It carries out the reaction 2 reduced [adrenodoxin] + cholesterol + O2 + 2 H(+) = (25R)-cholest-5-ene-3beta,26-diol + 2 oxidized [adrenodoxin] + H2O. The catalysed reaction is (25R)-3beta,4beta-dihydroxycholest-5-en-26-al + 2 reduced [adrenodoxin] + O2 + H(+) = (25R)-3beta,4beta-dihydroxycholest-5-en-26-oate + 2 oxidized [adrenodoxin] + H2O. The enzyme catalyses (25R)-4beta,26-dihydroxycholesterol + 2 reduced [adrenodoxin] + O2 + 2 H(+) = (25R)-3beta,4beta-dihydroxycholest-5-en-26-al + 2 oxidized [adrenodoxin] + 2 H2O. It catalyses the reaction 4beta-hydroxycholesterol + 2 reduced [adrenodoxin] + O2 + 2 H(+) = (25R)-4beta,26-dihydroxycholesterol + 2 oxidized [adrenodoxin] + H2O. It carries out the reaction (25R)-3beta-hydroxy-5-cholesten-26-al + 2 reduced [adrenodoxin] + O2 + H(+) = (25R)-3beta-hydroxy-5-cholestenoate + 2 oxidized [adrenodoxin] + H2O. The catalysed reaction is (25R)-cholest-5-ene-3beta,26-diol + 2 reduced [adrenodoxin] + O2 + 2 H(+) = (25R)-3beta-hydroxy-5-cholesten-26-al + 2 oxidized [adrenodoxin] + 2 H2O. The enzyme catalyses (25R)-3alpha,7alpha,12alpha-trihydroxy-5beta-cholestan-26-al + 2 reduced [adrenodoxin] + O2 + H(+) = (25R)-3alpha,7alpha,12alpha-trihydroxy-5beta-cholestan-26-oate + 2 oxidized [adrenodoxin] + H2O. It catalyses the reaction 5beta-cholestane-3alpha,7alpha,12alpha-triol + 2 reduced [adrenodoxin] + O2 + 2 H(+) = (25R)-5beta-cholestane-3alpha,7alpha,12alpha,26-tetrol + 2 oxidized [adrenodoxin] + H2O. It participates in hormone biosynthesis; cholecalciferol biosynthesis. It functions in the pathway steroid metabolism; cholesterol degradation. The protein operates within lipid metabolism; bile acid biosynthesis. Functionally, cytochrome P450 monooxygenase that catalyzes regio- and stereospecific hydroxylation of cholesterol and its derivatives. Hydroxylates (with R stereochemistry) the terminal methyl group of cholesterol side-chain in a three step reaction to yield at first a C26 alcohol, then a C26 aldehyde and finally a C26 acid. Regulates cholesterol homeostasis by catalyzing the conversion of excess cholesterol to bile acids via both the 'neutral' (classic) and the 'acid' (alternative) pathways. May also regulate cholesterol homeostasis via generation of active oxysterols, which act as ligands for NR1H2 and NR1H3 nuclear receptors, modulating the transcription of genes involved in lipid metabolism. Plays a role in cholestanol metabolism in the cerebellum. Similarly to cholesterol, hydroxylates cholestanol and may facilitate sterol diffusion through the blood-brain barrier to the systemic circulation for further degradation. Also hydroxylates retinal 7-ketocholesterol, a noxious oxysterol with pro-inflammatory and pro-apoptotic effects, and may play a role in its elimination from the retinal pigment epithelium. May play a redundant role in vitamin D biosynthesis. Catalyzes 25-hydroxylation of vitamin D3 that is required for its conversion to a functionally active form. The chain is Sterol 26-hydroxylase, mitochondrial from Mus musculus (Mouse).